A 449-amino-acid chain; its full sequence is Serine--tRNA ligase (449 aa).

Residue 255 to 257 (TSE) coordinates L-serine. 286–288 (RSE) provides a ligand contact to ATP. E309 lines the L-serine pocket. Position 373–376 (373–376 (EISS)) interacts with ATP. S409 lines the L-serine pocket.

The protein belongs to the class-II aminoacyl-tRNA synthetase family. Type-1 seryl-tRNA synthetase subfamily. As to quaternary structure, homodimer. The tRNA molecule binds across the dimer.

It localises to the cytoplasm. It catalyses the reaction tRNA(Ser) + L-serine + ATP = L-seryl-tRNA(Ser) + AMP + diphosphate + H(+). It carries out the reaction tRNA(Sec) + L-serine + ATP = L-seryl-tRNA(Sec) + AMP + diphosphate + H(+). The protein operates within aminoacyl-tRNA biosynthesis; selenocysteinyl-tRNA(Sec) biosynthesis; L-seryl-tRNA(Sec) from L-serine and tRNA(Sec): step 1/1. Functionally, catalyzes the attachment of serine to tRNA(Ser). Is also able to aminoacylate tRNA(Sec) with serine, to form the misacylated tRNA L-seryl-tRNA(Sec), which will be further converted into selenocysteinyl-tRNA(Sec). This Bordetella avium (strain 197N) protein is Serine--tRNA ligase.